An 83-amino-acid chain; its full sequence is Putative beta-neurotoxin RjAa15f (83 aa).

Residues 1 to 18 (MKILIFIIASFMLIGVEC) form the signal peptide. The LCN-type CS-alpha/beta domain maps to 19–82 (KEGYPMGRNG…VWDSSNNKCV (64 aa)). Cystine bridges form between Cys29/Cys81, Cys33/Cys55, Cys40/Cys62, and Cys44/Cys64.

It belongs to the long (4 C-C) scorpion toxin superfamily. Sodium channel inhibitor family. Beta subfamily. Expressed by the venom gland.

Its subcellular location is the secreted. Functionally, beta toxins bind voltage-independently at site-4 of sodium channels (Nav) and shift the voltage of activation toward more negative potentials thereby affecting sodium channel activation and promoting spontaneous and repetitive firing. This is Putative beta-neurotoxin RjAa15f from Rhopalurus junceus (Caribbean blue scorpion).